A 173-amino-acid chain; its full sequence is Large ribosomal subunit protein uL10 (173 aa).

Belongs to the universal ribosomal protein uL10 family. Part of the ribosomal stalk of the 50S ribosomal subunit. The N-terminus interacts with L11 and the large rRNA to form the base of the stalk. The C-terminus forms an elongated spine to which L12 dimers bind in a sequential fashion forming a multimeric L10(L12)X complex.

Functionally, forms part of the ribosomal stalk, playing a central role in the interaction of the ribosome with GTP-bound translation factors. The sequence is that of Large ribosomal subunit protein uL10 from Cupriavidus necator (strain ATCC 17699 / DSM 428 / KCTC 22496 / NCIMB 10442 / H16 / Stanier 337) (Ralstonia eutropha).